The primary structure comprises 226 residues: Peptidyl-prolyl cis-trans isomerase CYP23 (226 aa).

The N-terminal stretch at 1-22 (MGITRNLILGLACLAFVSIAKA) is a signal peptide. The PPIase cyclophilin-type domain occupies 34 to 191 (VVFQTSYGDI…ERITILSTYY (158 aa)).

The protein belongs to the cyclophilin-type PPIase family. Ubiquitous. Lower expression in roots.

It is found in the endoplasmic reticulum. It carries out the reaction [protein]-peptidylproline (omega=180) = [protein]-peptidylproline (omega=0). In terms of biological role, PPIases accelerate the folding of proteins. It catalyzes the cis-trans isomerization of proline imidic peptide bonds in oligopeptides. The protein is Peptidyl-prolyl cis-trans isomerase CYP23 (CYP23) of Arabidopsis thaliana (Mouse-ear cress).